Reading from the N-terminus, the 124-residue chain is MKKSKGSIESEISKSITQWEKDYLGRGSVSVKTDILRDMIIVNLKGILTPAEYVVCGSKEGMLSIKQTRSELVESGIEGLKDIILKITGEKVKSFHTDLSSRTGERVMVFKLCNDLEKNLEKIL.

This is an uncharacterized protein from Bacillus subtilis (strain 168).